A 371-amino-acid polypeptide reads, in one-letter code: Cysteine endopeptidase Rep1 (371 aa).

Residues 1 to 28 (MGRVISSWRVLAVVAALMAMAAVELCAA) form the signal peptide. The propeptide at 29-133 (IPFDERDLES…LPGFMYEGVR (105 aa)) is activation peptide. Disulfide bonds link cysteine 156–cysteine 198, cysteine 190–cysteine 231, and cysteine 290–cysteine 342. Residue cysteine 159 is part of the active site. A glycan (N-linked (GlcNAc...) asparagine) is linked at asparagine 228. Catalysis depends on residues histidine 296 and asparagine 317.

Belongs to the peptidase C1 family. As to expression, expressed in germinating seeds.

The protein localises to the protein storage vacuole. Its function is as follows. Cysteine endopeptidase that digests in vitro both the acidic and basic subunits of glutelin, the major seed storage protein of rice. Acts as a negative regulator of cell death. The chain is Cysteine endopeptidase Rep1 from Oryza sativa subsp. japonica (Rice).